We begin with the raw amino-acid sequence, 191 residues long: NADH-quinone oxidoreductase subunit B 2 (191 aa).

4 residues coordinate [4Fe-4S] cluster: cysteine 69, cysteine 70, cysteine 134, and cysteine 164.

This sequence belongs to the complex I 20 kDa subunit family. NDH-1 is composed of 14 different subunits. Subunits NuoB, C, D, E, F, and G constitute the peripheral sector of the complex. [4Fe-4S] cluster serves as cofactor.

It localises to the cell inner membrane. The catalysed reaction is a quinone + NADH + 5 H(+)(in) = a quinol + NAD(+) + 4 H(+)(out). Its function is as follows. NDH-1 shuttles electrons from NADH, via FMN and iron-sulfur (Fe-S) centers, to quinones in the respiratory chain. Couples the redox reaction to proton translocation (for every two electrons transferred, four hydrogen ions are translocated across the cytoplasmic membrane), and thus conserves the redox energy in a proton gradient. The sequence is that of NADH-quinone oxidoreductase subunit B 2 from Gluconacetobacter diazotrophicus (strain ATCC 49037 / DSM 5601 / CCUG 37298 / CIP 103539 / LMG 7603 / PAl5).